The following is a 201-amino-acid chain: Pyrrolidone-carboxylate peptidase (201 aa).

Residues glutamate 78, cysteine 141, and histidine 165 contribute to the active site.

This sequence belongs to the peptidase C15 family. In terms of assembly, homotetramer.

It localises to the cytoplasm. It carries out the reaction Release of an N-terminal pyroglutamyl group from a polypeptide, the second amino acid generally not being Pro.. Removes 5-oxoproline from various penultimate amino acid residues except L-proline. This chain is Pyrrolidone-carboxylate peptidase, found in Brachyspira hyodysenteriae (strain ATCC 49526 / WA1).